The sequence spans 75 residues: Putative membrane protein insertion efficiency factor (75 aa).

Belongs to the UPF0161 family.

It localises to the cell membrane. Its function is as follows. Could be involved in insertion of integral membrane proteins into the membrane. This chain is Putative membrane protein insertion efficiency factor (ytjA), found in Bacillus subtilis (strain 168).